The chain runs to 81 residues: TSQPDCSVGCDTSYCPDTSSCNCGTFADYCKCCQYCNACAGKTCNMIAGQSCEDGYLCRPPEGYSYIDVVTGRISSLCLRI.

As to quaternary structure, multimeric. Hemolymph; Hemocyte.

This Tachypleus tridentatus (Japanese horseshoe crab) protein is 8.6 kDa transglutaminase substrate.